A 423-amino-acid polypeptide reads, in one-letter code: uncharacterized protein (423 aa).

It belongs to the asfivirus E423R family.

The protein localises to the virion. This is an uncharacterized protein from African swine fever virus (isolate Tick/South Africa/Pretoriuskop Pr4/1996) (ASFV).